The sequence spans 153 residues: Mitotic-spindle organizing protein 2 (153 aa).

The disordered stretch occupies residues 80–153 (KVSETSTGDA…SSSSSQLTSN (74 aa)). Composition is skewed to polar residues over residues 81-99 (VSET…TAVP) and 107-133 (KMSS…SATR). A compositionally biased stretch (low complexity) spans 134 to 153 (GQKSTKSSGSSSSSSQLTSN).

Belongs to the MOZART2 family. Part of the gamma-tubulin complex. Interacts with TUBG1.

It is found in the cytoplasm. Its subcellular location is the cytoskeleton. It localises to the microtubule organizing center. The protein localises to the centrosome. The protein resides in the spindle. The protein is Mitotic-spindle organizing protein 2 (mzt2) of Danio rerio (Zebrafish).